A 673-amino-acid polypeptide reads, in one-letter code: DNA ligase (673 aa).

NAD(+)-binding positions include 32–36, 81–82, and Glu113; these read DAEYD and SL. Catalysis depends on Lys115, which acts as the N6-AMP-lysine intermediate. NAD(+) contacts are provided by Arg136, Glu173, Lys290, and Lys314. The Zn(2+) site is built by Cys408, Cys411, Cys426, and Cys432. The 79-residue stretch at 595–673 folds into the BRCT domain; that stretch reads EIDSPFAGKT…EAEMIRLLGA (79 aa).

The protein belongs to the NAD-dependent DNA ligase family. LigA subfamily. Mg(2+) serves as cofactor. It depends on Mn(2+) as a cofactor.

The enzyme catalyses NAD(+) + (deoxyribonucleotide)n-3'-hydroxyl + 5'-phospho-(deoxyribonucleotide)m = (deoxyribonucleotide)n+m + AMP + beta-nicotinamide D-nucleotide.. In terms of biological role, DNA ligase that catalyzes the formation of phosphodiester linkages between 5'-phosphoryl and 3'-hydroxyl groups in double-stranded DNA using NAD as a coenzyme and as the energy source for the reaction. It is essential for DNA replication and repair of damaged DNA. The polypeptide is DNA ligase (Serratia proteamaculans (strain 568)).